We begin with the raw amino-acid sequence, 208 residues long: Uracil phosphoribosyltransferase (208 aa).

Residues Arg78, Arg103, and 130–138 (DPMLATGGS) contribute to the 5-phospho-alpha-D-ribose 1-diphosphate site. Residues Ile193 and 198 to 200 (GDA) each bind uracil. Residue Asp199 participates in 5-phospho-alpha-D-ribose 1-diphosphate binding.

Belongs to the UPRTase family. Mg(2+) is required as a cofactor.

The catalysed reaction is UMP + diphosphate = 5-phospho-alpha-D-ribose 1-diphosphate + uracil. Its pathway is pyrimidine metabolism; UMP biosynthesis via salvage pathway; UMP from uracil: step 1/1. Allosterically activated by GTP. In terms of biological role, catalyzes the conversion of uracil and 5-phospho-alpha-D-ribose 1-diphosphate (PRPP) to UMP and diphosphate. This is Uracil phosphoribosyltransferase from Neisseria meningitidis serogroup C (strain 053442).